Reading from the N-terminus, the 885-residue chain is Putative membrane protein YdgH (885 aa).

The next 7 membrane-spanning stretches (helical) occupy residues 9-29 (WAIAAIVLALTVVLSLFSPNL), 181-201 (IIGLLLIVFRSVVTPFIPIVV), 202-222 (VGFSYLISQSILGILVYNVDF), 227-247 (FTQTFLVAILFGIGTDYCILL), 278-298 (ISGFAVLIGFSALGFAKFAIF), 304-324 (VAVGVGILMIILYTLLPLFMV), and 354-374 (VARPFLFIVITVVITLPFILT). The disordered stretch occupies residues 498–518 (MAGQTGSASNGGSGGSLGDAA). The next 5 membrane-spanning stretches (helical) occupy residues 716–736 (MVIMIIGLFIVLTILFRSMIM), 740–760 (MIASLLLTYYTSISITELIFV), 772–792 (VPFFSFVILIALGVDYSIFLL), 817–837 (VIITAAIILAGTFAAMMPSGV), and 847–867 (IIIGLLLYGLVILPLFIPAII).

This sequence belongs to the resistance-nodulation-cell division (RND) (TC 2.A.6) family. MmpL subfamily.

The protein resides in the cell membrane. This chain is Putative membrane protein YdgH (ydgH), found in Bacillus subtilis (strain 168).